Here is a 257-residue protein sequence, read N- to C-terminus: MLTFIGLGLYDQKDISVKGLEAIREADVVYAEFYTSRLMGATLEDMQELYGKPVKVLMREDVEQHPKDTVLSDAVDKKVVFLTGGDAMVATTHVDLRLRAKKMGIETRLIHGASIQSAVCGLTGLQNYRFGKSATIAFPYKDIISETPYDTILMNKKNGLHTLLFLDIDREKGYMTVNRGIELLLKVEERRKEGAVAGALCVGIARAGSPSPCVRAGRIEELQAFDFGGPLHIMVMPADLHFLEEEALQDLAGLKLG.

Residues L9, D86, V89, 114–115, L166, A207, and H232 each bind S-adenosyl-L-methionine; that span reads SI.

It belongs to the diphthine synthase family. In terms of assembly, homodimer.

The enzyme catalyses 2-[(3S)-amino-3-carboxypropyl]-L-histidyl-[translation elongation factor 2] + 3 S-adenosyl-L-methionine = diphthine-[translation elongation factor 2] + 3 S-adenosyl-L-homocysteine + 3 H(+). Its pathway is protein modification; peptidyl-diphthamide biosynthesis. S-adenosyl-L-methionine-dependent methyltransferase that catalyzes the trimethylation of the amino group of the modified target histidine residue in translation elongation factor 2 (EF-2), to form an intermediate called diphthine. The three successive methylation reactions represent the second step of diphthamide biosynthesis. The sequence is that of Diphthine synthase from Methanocella arvoryzae (strain DSM 22066 / NBRC 105507 / MRE50).